Here is a 323-residue protein sequence, read N- to C-terminus: E3 ubiquitin-protein ligase SIRP1 (323 aa).

The segment at cysteine 199–arginine 240 adopts an RING-type; atypical zinc-finger fold. Disordered regions lie at residues threonine 248–asparagine 280 and arginine 296–serine 323. A compositionally biased stretch (basic and acidic residues) spans arginine 259–alanine 269.

It is found in the cytoplasm. The catalysed reaction is S-ubiquitinyl-[E2 ubiquitin-conjugating enzyme]-L-cysteine + [acceptor protein]-L-lysine = [E2 ubiquitin-conjugating enzyme]-L-cysteine + N(6)-ubiquitinyl-[acceptor protein]-L-lysine.. Its pathway is protein modification; protein ubiquitination. Its function is as follows. Possesses E3 ubiqutin-protein ligase activity in vitro. Acts as negative regulator of salinity stress tolerance mediated by the ubiquitin-proteasome degradation pathway. This Oryza sativa subsp. japonica (Rice) protein is E3 ubiquitin-protein ligase SIRP1.